Reading from the N-terminus, the 156-residue chain is Ribosomal RNA large subunit methyltransferase H (156 aa).

S-adenosyl-L-methionine-binding positions include Leu73, Gly104, and 123 to 128 (LSPLTL).

It belongs to the RNA methyltransferase RlmH family. Homodimer.

It is found in the cytoplasm. It catalyses the reaction pseudouridine(1915) in 23S rRNA + S-adenosyl-L-methionine = N(3)-methylpseudouridine(1915) in 23S rRNA + S-adenosyl-L-homocysteine + H(+). Specifically methylates the pseudouridine at position 1915 (m3Psi1915) in 23S rRNA. The sequence is that of Ribosomal RNA large subunit methyltransferase H from Edwardsiella ictaluri (strain 93-146).